Here is a 487-residue protein sequence, read N- to C-terminus: Glutamyl-tRNA(Gln) amidotransferase subunit A (487 aa).

Catalysis depends on charge relay system residues K77 and S152. The active-site Acyl-ester intermediate is the S176.

Belongs to the amidase family. GatA subfamily. As to quaternary structure, heterotrimer of A, B and C subunits.

It catalyses the reaction L-glutamyl-tRNA(Gln) + L-glutamine + ATP + H2O = L-glutaminyl-tRNA(Gln) + L-glutamate + ADP + phosphate + H(+). Functionally, allows the formation of correctly charged Gln-tRNA(Gln) through the transamidation of misacylated Glu-tRNA(Gln) in organisms which lack glutaminyl-tRNA synthetase. The reaction takes place in the presence of glutamine and ATP through an activated gamma-phospho-Glu-tRNA(Gln). This is Glutamyl-tRNA(Gln) amidotransferase subunit A from Lysinibacillus sphaericus (strain C3-41).